The following is a 24-amino-acid chain: FWGALAKGALKLIPSLFSSFSKKD.

Homooligomer. Expressed by the venom gland.

The protein resides in the secreted. The protein localises to the target cell membrane. Disrupts cell membranes through formation of pores. Has strong antimicrobial activity against Gram-positive bacteria B.subtilis, S.epidermidis, E.faecalis and S.aureus. Is less active against Gram-negative bacteria P.aeruginosa and E.coli. Also increases efficacy of antibiotics (ampicillin, chloramphenicol, streptomycin, kanamycin, novobiocin) when tested against E.coli, probably by facilitating their incorporation into the bacteria. Possesses antifungal activity against C.albicans and hemolytic activity against human, sheep and pig erythrocytes. The protein is Pandinin-2 of Pandinus imperator (Emperor scorpion).